The following is a 245-amino-acid chain: Demethylmenaquinone methyltransferase (245 aa).

S-adenosyl-L-methionine-binding positions include Thr-62, Asp-80, 105–106, and Ser-122; that span reads DA.

It belongs to the class I-like SAM-binding methyltransferase superfamily. MenG/UbiE family.

The catalysed reaction is a 2-demethylmenaquinol + S-adenosyl-L-methionine = a menaquinol + S-adenosyl-L-homocysteine + H(+). Its pathway is quinol/quinone metabolism; menaquinone biosynthesis; menaquinol from 1,4-dihydroxy-2-naphthoate: step 2/2. Its function is as follows. Methyltransferase required for the conversion of demethylmenaquinol (DMKH2) to menaquinol (MKH2). This chain is Demethylmenaquinone methyltransferase, found in Clavibacter sepedonicus (Clavibacter michiganensis subsp. sepedonicus).